The primary structure comprises 89 residues: Small ribosomal subunit protein uS15 (89 aa).

Over residues 1–21 (MALSKEQKTETLKEFGLHETD) the composition is skewed to basic and acidic residues. The disordered stretch occupies residues 1 to 22 (MALSKEQKTETLKEFGLHETDT).

It belongs to the universal ribosomal protein uS15 family. As to quaternary structure, part of the 30S ribosomal subunit. Forms a bridge to the 50S subunit in the 70S ribosome, contacting the 23S rRNA.

One of the primary rRNA binding proteins, it binds directly to 16S rRNA where it helps nucleate assembly of the platform of the 30S subunit by binding and bridging several RNA helices of the 16S rRNA. Its function is as follows. Forms an intersubunit bridge (bridge B4) with the 23S rRNA of the 50S subunit in the ribosome. The chain is Small ribosomal subunit protein uS15 from Corynebacterium jeikeium (strain K411).